Here is a 372-residue protein sequence, read N- to C-terminus: Prostaglandin E synthase 2 (372 aa).

Residues 1–54 lie on the Lumenal side of the membrane; that stretch reads MAHAVRALWPHGRALAWRLGDRPALGLHAQSRAGFTGAAGGSGPAATARKGGPR. The chain crosses the membrane as a helical span at residues 55 to 71; the sequence is LLGAAALALGGALGLYH. The Cytoplasmic portion of the chain corresponds to 72–372; it reads TARWHLRAQD…VEKAIAEAPQ (301 aa). Positions 87 to 190 constitute a Glutaredoxin domain; sequence SATQLSLSSR…DIITYYPPMK (104 aa). S92 bears the Phosphoserine mark. Residues V145 and 161 to 162 contribute to the glutathione site; that span reads DS. A GST C-terminal domain is found at 259-372; the sequence is DYIVKEGNFG…VEKAIAEAPQ (114 aa).

Belongs to the GST superfamily. May interact with CEBPB. Interacts with EXOSC10. Homodimer. Synthesized as a Golgi membrane-associated protein, and the proteolytic removal of the N-terminal hydrophobic domain leads to the formation of a mature cytosolic enzyme. As to expression, detected in heart (at protein level). Widely expressed. Expressed in heart &gt; kidney &gt; muscle &gt; testis &gt; endometrium = ovary &gt; myometrium = spleen = lung. In endometrium, it is mainly expressed in luminal epithelial cells followed by glandular epithelial cells, but expression is also present in stromal cells at a lower level.

The protein localises to the microsome membrane. It is found in the cytoplasm. The catalysed reaction is prostaglandin H2 = prostaglandin E2. It catalyses the reaction prostaglandin H2 = (12S)-hydroxy-(5Z,8E,10E)-heptadecatrienoate + malonaldehyde. The protein operates within lipid metabolism; prostaglandin biosynthesis. With respect to regulation, isomerase activity is increased by sulfhydril compounds. Dithiothreitol (DTT) is most effective, followed by glutathione (GSH) and 2-mercaptoethanol. Its function is as follows. Isomerase that catalyzes the conversion of PGH2 into the more stable prostaglandin E2 (PGE2) (in vitro). The biological function and the GSH-dependent property of PTGES2 is still under debate. In vivo, PTGES2 could form a complex with GSH and heme and would not participate in PGE2 synthesis but would catalyze the degradation of prostaglandin E2 H2 (PGH2) to 12(S)-hydroxy-5(Z),8(E),10(E)-heptadecatrienoic acid (HHT) and malondialdehyde (MDA). This Bos taurus (Bovine) protein is Prostaglandin E synthase 2 (PTGES2).